Here is a 592-residue protein sequence, read N- to C-terminus: Craniofacial development protein 2 (592 aa).

A compositionally biased stretch (basic and acidic residues) spans 1 to 16 (MEEFDSKDISTSKDED). 2 disordered regions span residues 1 to 225 (MEEF…KGQS) and 499 to 592 (VTNE…DCNN). Acidic residues predominate over residues 25–42 (HEDDINELVKEDEVDGEE). Basic and acidic residues-rich tracts occupy residues 78-108 (SRES…RQEE) and 147-162 (KVEE…EVKL). The span at 175–184 (LTQQGRLSGR) shows a compositional bias: polar residues. 4 stretches are compositionally biased toward basic and acidic residues: residues 185–207 (TSED…RRAD), 508–523 (EEAK…EKPE), 552–562 (SVFKQDEKDKP), and 580–592 (EKCD…DCNN). Residues 499–578 (VTNEEDATNE…SVPSLPAGSG (80 aa)) are hydrophilic.

Phosphorylated by CK2 (casein kinase II) in vitro. As to expression, expressed in liver and lung with higher expression in brain.

It localises to the cytoplasm. The protein resides in the nucleus. The polypeptide is Craniofacial development protein 2 (CFDP2) (Bos taurus (Bovine)).